The primary structure comprises 240 residues: 4-hydroxy-tetrahydrodipicolinate reductase (240 aa).

Residues 8–13, 78–80, and 102–105 each bind NAD(+); these read GSTGKM, GTT, and SANM. The active-site Proton donor/acceptor is the His134. His135 contributes to the (S)-2,3,4,5-tetrahydrodipicolinate binding site. Lys138 serves as the catalytic Proton donor. 144–145 contributes to the (S)-2,3,4,5-tetrahydrodipicolinate binding site; it reads GT.

It belongs to the DapB family.

It localises to the cytoplasm. It carries out the reaction (S)-2,3,4,5-tetrahydrodipicolinate + NAD(+) + H2O = (2S,4S)-4-hydroxy-2,3,4,5-tetrahydrodipicolinate + NADH + H(+). The catalysed reaction is (S)-2,3,4,5-tetrahydrodipicolinate + NADP(+) + H2O = (2S,4S)-4-hydroxy-2,3,4,5-tetrahydrodipicolinate + NADPH + H(+). It participates in amino-acid biosynthesis; L-lysine biosynthesis via DAP pathway; (S)-tetrahydrodipicolinate from L-aspartate: step 4/4. Functionally, catalyzes the conversion of 4-hydroxy-tetrahydrodipicolinate (HTPA) to tetrahydrodipicolinate. In Rickettsia canadensis (strain McKiel), this protein is 4-hydroxy-tetrahydrodipicolinate reductase.